We begin with the raw amino-acid sequence, 376 residues long: Lateral eye opsin (376 aa).

Topologically, residues 1–46 (MANQLSYSSLGWPYQPNASVVDTMPKEMLYMIHEHWYAFPPMNPLW) are extracellular. An N-linked (GlcNAc...) asparagine glycan is attached at asparagine 17. Residues 47 to 71 (YSILGVAMIILGIICVLGNGMVIYL) form a helical membrane-spanning segment. At 72–83 (MMTTKSLRTPTN) the chain is on the cytoplasmic side. Residues 84–108 (LLVVNLAFSDFCMMAFMMPTMTSNC) traverse the membrane as a helical segment. At 109 to 123 (FAETWILGPFMCEVY) the chain is on the extracellular side. A disulfide bridge connects residues cysteine 120 and cysteine 197. Residues 124-143 (GMAGSLFGCASIWSMVMITL) traverse the membrane as a helical segment. Topologically, residues 144–162 (DRYNVIVRGMAAAPLTHKK) are cytoplasmic. Residues 163–186 (ATLLLLFVWIWSGGWTILPFFGWS) traverse the membrane as a helical segment. Topologically, residues 187 to 210 (RYVPEGNLTSCTVDYLTKDWSSAS) are extracellular. N-linked (GlcNAc...) asparagine glycosylation occurs at asparagine 193. The chain crosses the membrane as a helical span at residues 211 to 238 (YVVIYGLAVYFLPLITMIYCYFFIVHAV). Over 239 to 274 (AEHEKQLREQAKKMNVASLRANADQQKQSAECRLAK) the chain is Cytoplasmic. Residues 275–298 (VAMMTVGLWFMAWTPYLIISWAGV) form a helical membrane-spanning segment. The Extracellular segment spans residues 299–306 (FSSGTRLT). The chain crosses the membrane as a helical span at residues 307–331 (PLATIWGSVFAKANSCYNPIVYGIS). Position 318 is an N6-(retinylidene)lysine (lysine 318). Residues 332–376 (HPRYKAALYQRFPSLACGSGESGSDVKSEASATTTMEEKPKIPEA) lie on the Cytoplasmic side of the membrane. A disordered region spans residues 349 to 376 (GSGESGSDVKSEASATTTMEEKPKIPEA). Residues 367-376 (MEEKPKIPEA) are compositionally biased toward basic and acidic residues.

The protein belongs to the G-protein coupled receptor 1 family. Opsin subfamily. Phosphorylated on some or all of the serine and threonine residues present in the C-terminal region. Lateral eye.

The protein resides in the membrane. In terms of biological role, visual pigments are the light-absorbing molecules that mediate vision. They consist of an apoprotein, opsin, covalently linked to cis-retinal. The protein is Lateral eye opsin of Limulus polyphemus (Atlantic horseshoe crab).